Reading from the N-terminus, the 362-residue chain is Terpene synthase 3 (362 aa).

A DDxx(x)D/E motif motif is present at residues 90–95; that stretch reads DDFLER. The short motif at 239-247 is the NDxxSxxxD/E motif element; sequence NDCVSYAKE.

Belongs to the terpene synthase family.

It catalyses the reaction (2E,6E)-farnesyl diphosphate = beta-maaliene + diphosphate. The catalysed reaction is (2E,6E)-farnesyl diphosphate = aristolene + diphosphate. The enzyme catalyses (2E,6E)-farnesyl diphosphate = calarene + diphosphate. It carries out the reaction (2E)-geranyl diphosphate = (E)-beta-ocimene + diphosphate. It catalyses the reaction (2E)-geranyl diphosphate = (Z)-beta-ocimene + diphosphate. The catalysed reaction is (2E)-geranyl diphosphate + H2O = linalool + diphosphate. The enzyme catalyses (2E)-geranyl diphosphate = beta-myrcene + diphosphate. Functionally, terpene synthase that converts its substrate farnesyl diphosphate (FPP) into an unidentified sesquiterpene as a major product, as well as beta-maaliene, aristolene, calarene and 2 additional unidentified sesquiterpene as minor products. Is also able to convert geranyl diphosphate (GPP) into a mixture of monoterpenes including (Z)-beta-ocimene, (E)-beta-ocimene, allo-ocimene, linalool and beta-myrcene. This chain is Terpene synthase 3, found in Dictyostelium discoideum (Social amoeba).